Reading from the N-terminus, the 688-residue chain is Telomere length regulation protein TEL2 (688 aa).

A phosphoserine mark is found at Ser417 and Ser419.

Belongs to the TEL2 family. In terms of assembly, component of the TTT complex composed of TEL2, TTI1 and TTI2. Interacts with TTI1 and TTI2.

It localises to the nucleus. It is found in the chromosome. The protein resides in the telomere. Part of the TTT complex that is required to stabilize protein levels of the phosphatidylinositol 3-kinase-related protein kinase (PIKK) family proteins. Required for telomere length regulation and telomere position effect. Regulates telomere length and participates in gene silencing at subtelomeric regions. Binds to telomeric DNA repeats. The sequence is that of Telomere length regulation protein TEL2 (TEL2) from Saccharomyces cerevisiae (strain ATCC 204508 / S288c) (Baker's yeast).